The primary structure comprises 102 residues: Protein Tat (102 aa).

The segment covering Met-1–Pro-10 has biased composition (basic and acidic residues). Residues Met-1–Thr-20 are disordered. The interaction with human CREBBP stretch occupies residues Met-1–Lys-24. The segment at Met-1–Gly-48 is transactivation. The Zn(2+) site is built by Cys-22, Cys-25, and Cys-27. The segment at Cys-22 to Cys-37 is cysteine-rich. Lys-28 carries the post-translational modification N6-acetyllysine; by host PCAF. Zn(2+) contacts are provided by Cys-30, His-33, Cys-34, and Cys-37. The tract at residues Phe-38–Gly-48 is core. The tract at residues Tyr-47–Asp-102 is disordered. A compositionally biased stretch (basic residues) spans Gly-48 to Lys-60. Residues Arg-49 to Arg-57 carry the Nuclear localization signal, RNA-binding (TAR), and protein transduction motif. Positions Arg-49–Lys-87 are interaction with the host capping enzyme RNGTT. N6-acetyllysine; by host EP300 and GCN5L2 occurs at positions 50 and 51. Arg-52 bears the Asymmetric dimethylarginine; by host PRMT6 mark. A compositionally biased stretch (polar residues) spans Leu-74–Gln-85. Over residues Lys-90 to Asp-102 the composition is skewed to basic and acidic residues.

It belongs to the lentiviruses Tat family. In terms of assembly, interacts with host CCNT1. Associates with the P-TEFb complex composed at least of Tat, P-TEFb (CDK9 and CCNT1), TAR RNA, RNA Pol II. Recruits the HATs CREBBP, TAF1/TFIID, EP300, PCAF and GCN5L2. Interacts with host KAT5/Tip60; this interaction targets the latter to degradation. Interacts with the host deacetylase SIRT1. Interacts with host capping enzyme RNGTT; this interaction stimulates RNGTT. Binds to host KDR, and to the host integrins ITGAV/ITGB3 and ITGA5/ITGB1. Interacts with host KPNB1/importin beta-1 without previous binding to KPNA1/importin alpha-1. Interacts with EIF2AK2. Interacts with host nucleosome assembly protein NAP1L1; this interaction may be required for the transport of Tat within the nucleus, since the two proteins interact at the nuclear rim. Interacts with host C1QBP/SF2P32; this interaction involves lysine-acetylated Tat. Interacts with the host chemokine receptors CCR2, CCR3 and CXCR4. Interacts with host DPP4/CD26; this interaction may trigger an anti-proliferative effect. Interacts with host LDLR. Interacts with the host extracellular matrix metalloproteinase MMP1. Interacts with host PRMT6; this interaction mediates Tat's methylation. Interacts with, and is ubiquitinated by MDM2/Hdm2. Interacts with host PSMC3 and HTATIP2. Interacts with STAB1; this interaction may overcome SATB1-mediated repression of IL2 and IL2RA (interleukin) in T cells by binding to the same domain than HDAC1. Interacts (when acetylated) with human CDK13, thereby increasing HIV-1 mRNA splicing and promoting the production of the doubly spliced HIV-1 protein Nef. Interacts with host TBP; this interaction modulates the activity of transcriptional pre-initiation complex. Interacts with host RELA. Interacts with host PLSCR1; this interaction negatively regulates Tat transactivation activity by altering its subcellular distribution. Asymmetrical arginine methylation by host PRMT6 seems to diminish the transactivation capacity of Tat and affects the interaction with host CCNT1. In terms of processing, acetylation by EP300, CREBBP, GCN5L2/GCN5 and PCAF regulates the transactivation activity of Tat. EP300-mediated acetylation of Lys-50 promotes dissociation of Tat from the TAR RNA through the competitive binding to PCAF's bromodomain. In addition, the non-acetylated Tat's N-terminus can also interact with PCAF. PCAF-mediated acetylation of Lys-28 enhances Tat's binding to CCNT1. Lys-50 is deacetylated by SIRT1. Post-translationally, polyubiquitination by host MDM2 does not target Tat to degradation, but activates its transactivation function and fosters interaction with CCNT1 and TAR RNA. Phosphorylated by EIF2AK2 on serine and threonine residues adjacent to the basic region important for TAR RNA binding and function. Phosphorylation of Tat by EIF2AK2 is dependent on the prior activation of EIF2AK2 by dsRNA.

The protein localises to the host nucleus. Its subcellular location is the host nucleolus. It is found in the host cytoplasm. It localises to the secreted. Its function is as follows. Transcriptional activator that increases RNA Pol II processivity, thereby increasing the level of full-length viral transcripts. Recognizes a hairpin structure at the 5'-LTR of the nascent viral mRNAs referred to as the transactivation responsive RNA element (TAR) and recruits the cyclin T1-CDK9 complex (P-TEFb complex) that will in turn hyperphosphorylate the RNA polymerase II to allow efficient elongation. The CDK9 component of P-TEFb and other Tat-activated kinases hyperphosphorylate the C-terminus of RNA Pol II that becomes stabilized and much more processive. Other factors such as HTATSF1/Tat-SF1, SUPT5H/SPT5, and HTATIP2 are also important for Tat's function. Besides its effect on RNA Pol II processivity, Tat induces chromatin remodeling of proviral genes by recruiting the histone acetyltransferases (HATs) CREBBP, EP300 and PCAF to the chromatin. This also contributes to the increase in proviral transcription rate, especially when the provirus integrates in transcriptionally silent region of the host genome. To ensure maximal activation of the LTR, Tat mediates nuclear translocation of NF-kappa-B by interacting with host RELA. Through its interaction with host TBP, Tat may also modulate transcription initiation. Tat can reactivate a latently infected cell by penetrating in it and transactivating its LTR promoter. In the cytoplasm, Tat is thought to act as a translational activator of HIV-1 mRNAs. Functionally, extracellular circulating Tat can be endocytosed by surrounding uninfected cells via the binding to several surface receptors such as CD26, CXCR4, heparan sulfate proteoglycans (HSPG) or LDLR. Neurons are rarely infected, but they internalize Tat via their LDLR. Through its interaction with nuclear HATs, Tat is potentially able to control the acetylation-dependent cellular gene expression. Modulates the expression of many cellular genes involved in cell survival, proliferation or in coding for cytokines or cytokine receptors. Tat plays a role in T-cell and neurons apoptosis. Tat induced neurotoxicity and apoptosis probably contribute to neuroAIDS. Circulating Tat also acts as a chemokine-like and/or growth factor-like molecule that binds to specific receptors on the surface of the cells, affecting many cellular pathways. In the vascular system, Tat binds to ITGAV/ITGB3 and ITGA5/ITGB1 integrins dimers at the surface of endothelial cells and competes with bFGF for heparin-binding sites, leading to an excess of soluble bFGF. The protein is Protein Tat of Human immunodeficiency virus type 1 group N (isolate YBF106) (HIV-1).